Here is a 372-residue protein sequence, read N- to C-terminus: tRNA pseudouridine synthase D (372 aa).

Asp-85 serves as the catalytic Nucleophile. Residues 160–330 (GFANYFGYQR…MQGSRRFMWG (171 aa)) enclose the TRUD domain.

This sequence belongs to the pseudouridine synthase TruD family.

The enzyme catalyses uridine(13) in tRNA = pseudouridine(13) in tRNA. Functionally, responsible for synthesis of pseudouridine from uracil-13 in transfer RNAs. The protein is tRNA pseudouridine synthase D of Campylobacter jejuni subsp. jejuni serotype O:2 (strain ATCC 700819 / NCTC 11168).